The chain runs to 217 residues: Octanoyltransferase (217 aa).

Residues 32-207 (SESPDELWIV…TFSQLLGYQH (176 aa)) form the BPL/LPL catalytic domain. Residues 71–78 (RGGQVTYH), 138–140 (SLG), and 151–153 (GLA) contribute to the substrate site. Cys-169 (acyl-thioester intermediate) is an active-site residue.

It belongs to the LipB family.

The protein localises to the cytoplasm. The enzyme catalyses octanoyl-[ACP] + L-lysyl-[protein] = N(6)-octanoyl-L-lysyl-[protein] + holo-[ACP] + H(+). The protein operates within protein modification; protein lipoylation via endogenous pathway; protein N(6)-(lipoyl)lysine from octanoyl-[acyl-carrier-protein]: step 1/2. Catalyzes the transfer of endogenously produced octanoic acid from octanoyl-acyl-carrier-protein onto the lipoyl domains of lipoate-dependent enzymes. Lipoyl-ACP can also act as a substrate although octanoyl-ACP is likely to be the physiological substrate. The polypeptide is Octanoyltransferase (Shewanella sp. (strain W3-18-1)).